A 106-amino-acid chain; its full sequence is MPAFAIYFLAALAEIAGCFTFWAWLRLGKSGLWLLPGMASLAIFAWLLTMVDTPAAGRAYAAYGGIYIIASLCWLWVAEGARPDRWDMTGAAVALAGSAIILAGPR.

3 consecutive transmembrane segments (helical) span residues 4–24 (FAIY…FWAW), 31–51 (GLWL…LTMV), and 61–81 (AAYG…AEGA).

This sequence belongs to the UPF0060 family.

It is found in the cell inner membrane. The chain is UPF0060 membrane protein Smed_0659 from Sinorhizobium medicae (strain WSM419) (Ensifer medicae).